The following is a 337-amino-acid chain: MTLLMIFTILLVASSQIEGHLKFDIHDAQHYFETFIINYNKQYPDTKTKNYRFKIFKQNLEDINEKNKLNDSAIYNINKFSDLSKNELLTKYTGLTSKKPSNMVRSTSNFCNVIHLDAPPDVHDELPQNFDWRVNNKMTSVKDQGACGSCWAHAAVGTLETLYAIKHNYLINLSEQQLIDCDSANMACDGGLMHTAFEQLMNAGGLMEEIDYPYQGTKGVCKIDNKKFALSVSSCKRYIFQNEENLKKELITMGPIAMAIDAASISTYSKGIIHFCENLGLNHAVLLVGYGTEGGVSYWTLKNSWGSDWGEDGYFRVKRNINACGLNNQLAASATIH.

The N-terminal stretch at 1–19 is a signal peptide; sequence MTLLMIFTILLVASSQIEG. Positions 20–126 are cleaved as a propeptide — activation peptide; the sequence is HLKFDIHDAQ…DAPPDVHDEL (107 aa). Intrachain disulfides connect cysteine 147-cysteine 188, cysteine 181-cysteine 221, and cysteine 276-cysteine 324. Cysteine 150 is an active-site residue. Asparagine 172 carries an N-linked (GlcNAc...) asparagine; by host glycan. Catalysis depends on residues histidine 283 and asparagine 303.

This sequence belongs to the peptidase C1 family. Post-translationally, synthesized as an inactive proenzyme and activated by proteolytic removal of the inhibitory propeptide.

The catalysed reaction is Endopeptidase of broad specificity, hydrolyzing substrates of both cathepsin L and cathepsin B.. In terms of biological role, cysteine protease that plays an essential role in host liquefaction to facilitate horizontal transmission of the virus. May participate in the degradation of foreign protein expressed by the baculovirus system. The sequence is that of Viral cathepsin (VCATH) from Adoxophyes honmai (Smaller tea tortrix moth).